Consider the following 649-residue polypeptide: MISPAWSIFLIGTKIGLFLQVAPLSVMAKSCPSVCRCDAGFIYCNDRFLTSIPTGIPEDATTLYLQNNQINNAGIPSDLKNLLKVERIYLYHNSLDEFPTNLPKYVKELHLQENNIRTITYDSLSKIPYLEELRLDDNSVSAVSIEEGAFRDSNYLRLLFLSRNHLSTIPWGLPRTIEELRLDDNRIPTISSPSLQGLTSLKRLVLDGNLLNNHGLGDKVFFNLVNLTELSLVRNSLTAAPVNLPGTNLRKLYLQDNHINRVPPNAFSYLRQLYRLDMSNNNLSNLPQGIFDDLDNITQLILRNNPWYCGCKMKWVRDWLQSLPVKVNVRGLMCQAPEKVRGMAIKDLNAELFDCKDSGIVSTIQITTAIPNTVYPAQEQWPAPVTKQPDIKNPKLTKDHQTTGSPSRKTITITVKSVTSDTIHISWKLALPMTALRLSWLKLGHSPAFGSITETIVTGERSEYLVTALEPDSPYKVCMVPMETSNLYLFDETPVCIETETAPLRMYNPTTTLNREQEKEPYKNPNLPLAAIIGGAVALVTIALLALVCWYVHRNGSLFSRNCAYSKGRRRKDDYAEAGTKKDNSILEIRETSFQMLPISNEPISKEEFVIHTIFPPNGMNLYKNNHSESSSNRSYRDSGIPDSDHSHS.

A signal peptide spans 1–28; it reads MISPAWSIFLIGTKIGLFLQVAPLSVMA. An LRRNT domain is found at 29 to 58; it reads KSCPSVCRCDAGFIYCNDRFLTSIPTGIPE. Over 29 to 528 the chain is Extracellular; the sequence is KSCPSVCRCD…KEPYKNPNLP (500 aa). Intrachain disulfides connect C31–C37 and C35–C44. The interaction with ADGRL3 stretch occupies residues 38 to 67; it reads DAGFIYCNDRFLTSIPTGIPEDATTLYLQN. 10 LRR repeats span residues 59-80, 84-104, 105-126, 129-150, 155-176, 177-197, 200-220, 226-247, 248-269, and 272-293; these read DATT…SDLK, KVER…NLPK, YVKE…SLSK, YLEE…EGAF, YLRL…LPRT, IEEL…SLQG, SLKR…GDKV, NLTE…LPGT, NLRK…AFSY, and QLYR…IFDD. N226 is a glycosylation site (N-linked (GlcNAc...) asparagine). N-linked (GlcNAc...) asparagine glycans are attached at residues N282 and N296. One can recognise an LRRCT domain in the interval 305-357; sequence NPWYCGCKMKWVRDWLQSLPVKVNVRGLMCQAPEKVRGMAIKDLNAELFDCKD. A disulfide bond links C309 and C334. Residues 385-407 form a disordered region; that stretch reads VTKQPDIKNPKLTKDHQTTGSPS. The span at 389-401 shows a compositional bias: basic and acidic residues; that stretch reads PDIKNPKLTKDHQ. The region spanning 409–504 is the Fibronectin type-III domain; that stretch reads KTITITVKSV…VCIETETAPL (96 aa). Residues 529–549 form a helical membrane-spanning segment; it reads LAAIIGGAVALVTIALLALVC. Topologically, residues 550-649 are cytoplasmic; sequence WYVHRNGSLF…GIPDSDHSHS (100 aa). Residues 622 to 649 are disordered; it reads LYKNNHSESSSNRSYRDSGIPDSDHSHS.

In terms of assembly, monomer and homodimer. Self-associates (via leucine-rich repeats), giving rise to homooligomers. Interacts with FGFR1. Interacts (via extracellular domain) with ADGRL1/LPHN1 and LPHN2 (via olfactomedin-like domain). Interacts (via extracellular domain) with ADGRL3 (via olfactomedin-like domain); the interaction is direct. Interacts (via extracellular domain) with UNC5B and UNC5D (via extracellular domain); the interaction is direct. Identified in complexes composed of FLRT3, ADGRL3 and UNC5B, respectively FLRT3, ADGRL3 and UNC5D. May also interact (via extracellular domain) with UNC5A and UNC5C. Interacts (via cytoplasmic domain) with ROBO1. N-glycosylated. Post-translationally, proteolytic cleavage in the juxtamembrane region gives rise to a soluble ectodomain. Cleavage is probably effected by a metalloprotease.

The protein localises to the cell membrane. It localises to the presynaptic cell membrane. Its subcellular location is the endoplasmic reticulum membrane. The protein resides in the cell junction. It is found in the focal adhesion. The protein localises to the secreted. It localises to the cell projection. Its subcellular location is the axon. The protein resides in the growth cone membrane. Functionally, functions in cell-cell adhesion, cell migration and axon guidance, exerting an attractive or repulsive role depending on its interaction partners. Plays a role in the spatial organization of brain neurons. Plays a role in vascular development in the retina. Plays a role in cell-cell adhesion via its interaction with ADGRL3 and probably also other latrophilins that are expressed at the surface of adjacent cells. Interaction with the intracellular domain of ROBO1 mediates axon attraction towards cells expressing NTN1. Mediates axon growth cone collapse and plays a repulsive role in neuron guidance via its interaction with UNC5B, and possibly also other UNC-5 family members. Promotes neurite outgrowth (in vitro). Mediates cell-cell contacts that promote an increase both in neurite number and in neurite length. Plays a role in the regulation of the density of glutamaergic synapses. Plays a role in fibroblast growth factor-mediated signaling cascades. Required for normal morphogenesis during embryonic development, but not for normal embryonic patterning. Required for normal ventral closure, headfold fusion and definitive endoderm migration during embryonic development. Required for the formation of a normal basement membrane and the maintenance of a normal anterior visceral endoderm during embryonic development. This chain is Leucine-rich repeat transmembrane protein FLRT3 (FLRT3), found in Pongo abelii (Sumatran orangutan).